The following is a 284-amino-acid chain: Putative ABC transporter ATP-binding protein PH1815 (284 aa).

Positions 4 to 244 constitute an ABC transporter domain; sequence IEVEDVSFRY…VEFLRTIGVK (241 aa). 38–45 contributes to the ATP binding site; that stretch reads GPSGSGKS.

This sequence belongs to the ABC transporter superfamily.

Its subcellular location is the cell membrane. Probably part of an ABC transporter complex. Responsible for energy coupling to the transport system. The polypeptide is Putative ABC transporter ATP-binding protein PH1815 (Pyrococcus horikoshii (strain ATCC 700860 / DSM 12428 / JCM 9974 / NBRC 100139 / OT-3)).